Reading from the N-terminus, the 452-residue chain is Membrane-bound acylglycerophosphatidylinositol O-acyltransferase mboa-7 (452 aa).

Transmembrane regions (helical) follow at residues 4–24 (IIGLMSRDDWVYTGLLLFSFA), 53–73 (PRIAYSLGICAIAVGIQAFAP), 79–99 (FYVFLTTFTYLMFVRFAHYFL), and 104–124 (VASHTNVIQLIITLRIIGITF). Asn137 is a glycosylation site (N-linked (GlcNAc...) asparagine). A run of 3 helical transmembrane segments spans residues 153 to 173 (FAYFYHFCGLFTGPYYTYQML), 220 to 240 (AIWEVSFFTRLVYAALIFVVF), and 244 to 264 (VYSAWAIAESICVILGIGIYP). Residue Asn319 is glycosylated (N-linked (GlcNAc...) asparagine). Residue His350 is part of the active site. A helical membrane pass occupies residues 354–374 (AGYFMSFGVVAMCAILEDVIF). N-linked (GlcNAc...) asparagine glycosylation is present at Asn414. Residues 421-441 (FWSSIYYWLPLLCVPFYIYSV) form a helical membrane-spanning segment.

It belongs to the membrane-bound acyltransferase family.

It localises to the membrane. The catalysed reaction is a 1-acyl-sn-glycero-3-phospho-(1D-myo-inositol) + an acyl-CoA = a 1,2-diacyl-sn-glycero-3-phospho-(1D-myo-inositol) + CoA. It catalyses the reaction a fatty acyl-[ACP] + a 1-acyl-sn-glycero-3-phosphate = a 1,2-diacyl-sn-glycero-3-phosphate + holo-[ACP]. It participates in lipid metabolism; phospholipid metabolism. Acyltransferase which mediates the conversion of lysophosphatidylinositol (1-acylglycerophosphatidylinositol or LPI) into phosphatidylinositol (1,2-diacyl-sn-glycero-3-phosphoinositol or PI) (LPIAT activity). Prefers arachidonoyl-CoA or eicosapentaenoic acid (EPA) as the acyl donor. Prefers sn-2-LPI rather than sn-1-LPI as the acyl acceptor. Lysophospholipid acyltransferases (LPLATs) catalyze the reacylation step of the phospholipid remodeling pathway also known as the Lands cycle. The chain is Membrane-bound acylglycerophosphatidylinositol O-acyltransferase mboa-7 from Caenorhabditis briggsae.